Here is a 503-residue protein sequence, read N- to C-terminus: Rhomboid-type serine protease 2 (503 aa).

Polar residues predominate over residues 1 to 11 (MAAQSYYNGAY). Positions 1–66 (MAAQSYYNGA…SLRYSQQSIG (66 aa)) are disordered. Residues 1–136 (MAAQSYYNGA…QKKKGFFQKK (136 aa)) lie on the Cytoplasmic side of the membrane. The helical transmembrane segment at 137–157 (IAYVTYILTIAQIIVFIVELV) threads the bilayer. The Extracellular segment spans residues 158–253 (KMGQLTGSPI…DKPAPDQWFR (96 aa)). Residues 254–274 (FIIPMFLHSGFVHIGFNLLVQ) traverse the membrane as a helical segment. The Cytoplasmic segment spans residues 275–283 (MTMGADMER). Residues 284–304 (MIGWWRYGLVYLSSGIWGFVL) form a helical membrane-spanning segment. Topologically, residues 305–316 (GGNYAGQGEASC) are extracellular. A helical transmembrane segment spans residues 317-337 (GCSGALFGILALFVLDLLYGW). Serine 319 acts as the Nucleophile in catalysis. Over 338 to 342 (NDRQN) the chain is Cytoplasmic. A helical membrane pass occupies residues 343–363 (PWVELIIMVLGIAVSFVLGLL). Residues 364 to 365 (PG) lie on the Extracellular side of the membrane. Residues 366–386 (LDNFSHLGGFTMGLALGLCVM) traverse the membrane as a helical segment. The active site involves histidine 371. The Cytoplasmic portion of the chain corresponds to 387-449 (RSPNALRERI…FAGRKPLWWA (63 aa)). Residues 450–470 (WWLVRLGALVAVLIGFILLIV) form a helical membrane-spanning segment. The Extracellular portion of the chain corresponds to 471–503 (NFYKYPSSNCSWCYRFSCLPVNGWCDQGNLFSR).

Belongs to the peptidase S54 family.

It is found in the membrane. The enzyme catalyses Cleaves type-1 transmembrane domains using a catalytic dyad composed of serine and histidine that are contributed by different transmembrane domains.. In terms of biological role, probable rhomboid-type serine protease that catalyzes intramembrane proteolysis. This is Rhomboid-type serine protease 2 from Emericella nidulans (strain FGSC A4 / ATCC 38163 / CBS 112.46 / NRRL 194 / M139) (Aspergillus nidulans).